A 116-amino-acid chain; its full sequence is NADH-ubiquinone oxidoreductase chain 3 (116 aa).

Transmembrane regions (helical) follow at residues 3-23 (LITT…TVSF), 56-76 (FFLI…LLPL), and 87-107 (LTLV…IYEW).

It belongs to the complex I subunit 3 family.

It localises to the mitochondrion membrane. The enzyme catalyses a ubiquinone + NADH + 5 H(+)(in) = a ubiquinol + NAD(+) + 4 H(+)(out). In terms of biological role, core subunit of the mitochondrial membrane respiratory chain NADH dehydrogenase (Complex I) that is believed to belong to the minimal assembly required for catalysis. Complex I functions in the transfer of electrons from NADH to the respiratory chain. The immediate electron acceptor for the enzyme is believed to be ubiquinone. The chain is NADH-ubiquinone oxidoreductase chain 3 (MT-ND3) from Oncorhynchus kisutch (Coho salmon).